The chain runs to 330 residues: Probable NAD(P)H-dependent D-xylose reductase xyl1 (330 aa).

Tyrosine 50 functions as the Proton donor in the catalytic mechanism. Histidine 112 serves as a coordination point for substrate. NAD(+) is bound by residues 166 to 167 (SN), 215 to 224 (SSFGPLSFLE), and 271 to 281 (KSNNPTRLAQN).

Belongs to the aldo/keto reductase family.

It catalyses the reaction xylitol + NAD(+) = D-xylose + NADH + H(+). The catalysed reaction is xylitol + NADP(+) = D-xylose + NADPH + H(+). Its pathway is carbohydrate metabolism; D-xylose degradation. Its function is as follows. Catalyzes the initial reaction in the xylose utilization pathway by reducing D-xylose into xylitol. Xylose is a major component of hemicelluloses such as xylan. Most fungi utilize D-xylose via three enzymatic reactions, xylose reductase (XR), xylitol dehydrogenase (XDH), and xylulokinase, to form xylulose 5-phosphate, which enters pentose phosphate pathway. The protein is Probable NAD(P)H-dependent D-xylose reductase xyl1 (xyl1) of Aspergillus clavatus (strain ATCC 1007 / CBS 513.65 / DSM 816 / NCTC 3887 / NRRL 1 / QM 1276 / 107).